The chain runs to 574 residues: Sulfite reductase [NADPH] hemoprotein beta-component (574 aa).

[4Fe-4S] cluster is bound by residues cysteine 439, cysteine 445, cysteine 484, and cysteine 488. Residue cysteine 488 participates in siroheme binding.

The protein belongs to the nitrite and sulfite reductase 4Fe-4S domain family. As to quaternary structure, alpha(8)-beta(8). The alpha component is a flavoprotein, the beta component is a hemoprotein. Siroheme serves as cofactor. It depends on [4Fe-4S] cluster as a cofactor.

The catalysed reaction is hydrogen sulfide + 3 NADP(+) + 3 H2O = sulfite + 3 NADPH + 4 H(+). The protein operates within sulfur metabolism; hydrogen sulfide biosynthesis; hydrogen sulfide from sulfite (NADPH route): step 1/1. Functionally, component of the sulfite reductase complex that catalyzes the 6-electron reduction of sulfite to sulfide. This is one of several activities required for the biosynthesis of L-cysteine from sulfate. The protein is Sulfite reductase [NADPH] hemoprotein beta-component of Paenibacillus sp. (strain JDR-2).